We begin with the raw amino-acid sequence, 236 residues long: Exotoxin type H (236 aa).

A signal peptide spans 1-32 (MRYNCRYSHIDKKIYSMIICLSFLLYSNVVQA).

It belongs to the staphylococcal/streptococcal toxin family.

It localises to the secreted. In terms of biological role, mitogenic for human peripheral blood lymphocytes. The sequence is that of Exotoxin type H (speH) from Streptococcus pyogenes serotype M1.